The following is an 854-amino-acid chain: Protein mono-ADP-ribosyltransferase PARP8 (854 aa).

Disordered stretches follow at residues 113 to 138 (NGEESRQNSTVEEDSEGDNDSEEFYY) and 291 to 310 (SYPPPGCGKSKSKLKSEQDG). Acidic residues predominate over residues 123 to 135 (VEEDSEGDNDSEE). ADP-ribosylcysteine is present on residues Cys332, Cys367, Cys376, and Cys395. The PARP catalytic domain maps to 617–844 (EMTQAPYLEI…QEGGIHKEIL (228 aa)). A disordered region spans residues 750 to 777 (QKVSAKDEPASSSKSSNTSQSQKKGQQS). A compositionally biased stretch (low complexity) spans 760–777 (SSSKSSNTSQSQKKGQQS).

It belongs to the ARTD/PARP family. In terms of processing, auto-mono-ADP-ribosylated.

It carries out the reaction L-cysteinyl-[protein] + NAD(+) = S-(ADP-D-ribosyl)-L-cysteinyl-[protein] + nicotinamide + H(+). Its function is as follows. Mono-ADP-ribosyltransferase that mediates mono-ADP-ribosylation of target proteins. The protein is Protein mono-ADP-ribosyltransferase PARP8 of Homo sapiens (Human).